The primary structure comprises 2458 residues: MVLLLCLSCLIFSCLTFSWLKIWGKMTDSKPITKSKSEANLIPSQEPFPASDNSGETPQRNGEGHTLPKTPSQAEPASHKGPKDAGRRRNSLPPSHQKPPRNPLSSSDAAPSPELQANGTGTQGLEATDTNGLSSSARPQGQQAGSPSKEDKKQANIKRQLMTNFILGSFDDYSSDEDSVAGSSRESTRKGSRASLGALSLEAYLTTGEAETRVPTMRPSMSGLHLVKRGREHKKLDLHRDFTVASPAEFVTRFGGDRVIEKVLIANNGIAAVKCMRSIRRWAYEMFRNERAIRFVVMVTPEDLKANAEYIKMADHYVPVPGGPNNNNYANVELIVDIAKRIPVQAVWAGWGHASENPKLPELLCKNGVAFLGPPSEAMWALGDKIASTVVAQTLQVPTLPWSGSGLTVEWTEDDLQQGKRISVPEDVYDKGCVKDVDEGLEAAERIGFPLMIKASEGGGGKGIRKAESAEDFPILFRQVQSEIPGSPIFLMKLAQHARHLEVQILADQYGNAVSLFGRDCSIQRRHQKIVEEAPATIAPLAIFEFMEQCAIRLAKTVGYVSAGTVEYLYSQDGSFHFLELNPRLQVEHPCTEMIADVNLPAAQLQIAMGVPLHRLKDIRLLYGESPWGVTPISFETPSNPPLARGHVIAARITSENPDEGFKPSSGTVQELNFRSSKNVWGYFSVAATGGLHEFADSQFGHCFSWGENREEAISNMVVALKELSIRGDFRTTVEYLINLLETESFQNNDIDTGWLDYLIAEKVQAEKPDIMLGVVCGALNVADAMFRTCMTDFLHSLERGQVLPADSLLNLVDVELIYGGVKYILKVARQSLTMFVLIMNGCHIEIDAHRLNDGGLLLSYNGNSYTTYMKEEVDSYRITIGNKTCVFEKENDPTVLRSPSAGKLTQYTVEDGGHVEAGSSYAEMEVMKMIMTLNVQERGRVKYIKRPGAVLEAGCVVARLELDDPSKVHPAEPFTGELPAQQTLPILGEKLHQVFHSVLENLTNVMSGFCLPEPVFSIKLKEWVQKLMMTLRHPSLPLLELQEIMTSVAGRIPAPVEKSVRRVMAQYASNITSVLCQFPSQQIATILDCHAATLQRKADREVFFINTQSIVQLVQRYRSGIRGYMKTVVLDLLRRYLRVEHHFQQAHYDKCVINLREQFKPDMSQVLDCIFSHAQVAKKNQLVIMLIDELCGPDPSLSDELISILNELTQLSKSEHCKVALRARQILIASHLPSYELRHNQVESIFLSAIDMYGHQFCPENLKKLILSETTIFDVLPTFFYHANKVVCMASLEVYVRRGYIAYELNSLQHRQLPDGTCVVEFQFMLPSSHPNRMTVPISITNPDLLRHSTELFMDSGFSPLCQRMGAMVAFRRFEDFTRNFDEVISCFANVPKDTPLFSEARTSLYSEDDCKSLREEPIHILNVSIQCADHLEDEALVPILRTFVQSKKNILVDYGLRRITFLIAQEKEFPKFFTFRARDEFAEDRIYRHLEPALAFQLELNRMRNFDLTAVPCANHKMHLYLGAAKVKEGVEVTDHRFFIRAIIRHSDLITKEASFEYLQNEGERLLLEAMDELEVAFNNTSVRTDCNHIFLNFVPTVIMDPFKIEESVRYMVMRYGSRLWKLRVLQAEVKINIRQTTTGSAVPIRLFITNESGYYLDISLYKEVTDSRSGNIMFHSFGNKQGPQHGMLINTPYVTKDLLQAKRFQAQTLGTTYIYDFPEMFRQALFKLWGSPDKYPKDILTYTELVLDSQGQLVEMNRLPGGNEVGMVAFKMRFKTQEYPEGRDVIVIGNDITFRIGSFGPGEDLLYLRASEMARAEGIPKIYVAANSGARIGMAEEIKHMFHVAWVDPEDPHKGFKYLYLTPQDYTRISSLNSVHCKHIEEGGESRYMITDIIGKDDGLGVENLRGSGMIAGESSLAYEEIVTISLVTCRAIGIGAYLVRLGQRVIQVENSHIILTGASALNKVLGREVYTSNNQLGGVQIMHYNGVSHITVPDDFEGVYTILEWLSYMPKDNHSPVPIITPTDPIDREIEFLPSRAPYDPRWMLAGRPHPTLKGTWQSGFFDHGSFKEIMAPWAQTVVTGRARLGGIPVGVIAVETRTVEVAVPADPANLDSEAKIIQQAGQVWFPDSAYKTAQAVKDFNREKLPLMIFANWRGFSGGMKDMYDQVLKFGAYIVDGLRQYKQPILIYIPPYAELRGGSWVVIDATINPLCIEMYADKESRGGVLEPEGTVEIKFRKKDLIKSMRRIDPAYKKLMEQLGEPDLSDKDRKDLEGRLKAREDLLLPIYHQVAVQFADFHDTPGRMLEKGVISDILEWKTARTFLYWRLRRLLLEDQVKQEILQASGELSHVHIQSMLRRWFVETEGAVKAYLWDNNQVVVQWLEQHWQAGDGPRSTIRENITYLKHDSVLKTIRGLVEENPEVAVDCVIYLSQHISPAERAQVVHLLSTMDSPAST.

Serine 35 is modified (phosphoserine). Residues 35-155 form a disordered region; that stretch reads SKSEANLIPS…SPSKEDKKQA (121 aa). Over residues 51–60 the composition is skewed to polar residues; that stretch reads SDNSGETPQR. Threonine 70 bears the Phosphothreonine mark. A compositionally biased stretch (basic and acidic residues) spans 77 to 87; it reads ASHKGPKDAGR. Phosphoserine is present on residues serine 91 and serine 95. Polar residues predominate over residues 103–146; it reads PLSSSDAAPSPELQANGTGTQGLEATDTNGLSSSARPQGQQAGS. Serine 169, serine 175, serine 192, serine 195, and serine 200 each carry phosphoserine. The disordered stretch occupies residues 174 to 193; sequence SSDEDSVAGSSRESTRKGSR. Threonine 207 is subject to Phosphothreonine. Serine 220 carries the post-translational modification Phosphoserine. Serine 222 is modified (phosphoserine; by AMPK). Positions 259 to 761 constitute a Biotin carboxylation domain; the sequence is VIEKVLIANN…DTGWLDYLIA (503 aa). An ATP-grasp domain is found at 414–609; sequence DDLQQGKRIS…LPAAQLQIAM (196 aa). 458 to 463 contacts ATP; it reads GGGGKG. Serine 469 bears the Phosphoserine mark. Glutamate 567, glutamate 580, and asparagine 582 together coordinate Mg(2+). Glutamate 567, glutamate 580, and asparagine 582 together coordinate Mn(2+). The active site involves arginine 584. Phosphothreonine is present on threonine 753. The Biotinyl-binding domain occupies 888-962; that stretch reads FEKENDPTVL…EAGCVVARLE (75 aa). N6-biotinyllysine is present on lysine 929. Residue serine 1340 is modified to Phosphoserine. At threonine 1342 the chain carries Phosphothreonine. A phosphoserine mark is found at serine 1360 and serine 1405. The CoA carboxyltransferase N-terminal domain occupies 1695–2025; it reads PYVTKDLLQA…DNHSPVPIIT (331 aa). Residues 1695 to 2345 are carboxyltransferase; that stretch reads PYVTKDLLQA…EDQVKQEILQ (651 aa). CoA is bound by residues arginine 1934, lysine 2238, and arginine 2240. The CoA carboxyltransferase C-terminal domain maps to 2029–2345; the sequence is PIDREIEFLP…EDQVKQEILQ (317 aa).

In terms of assembly, monomer, homodimer, and homotetramer. Forms filamentous polymers. Interacts with MID1IP1; interaction with MID1IP1 promotes oligomerization and increases its activity in a citrate-dependent manner. It depends on biotin as a cofactor. The cofactor is Mg(2+). Mn(2+) is required as a cofactor. The biotin cofactor is covalently attached to the central biotinyl-binding domain and is required for the catalytic activity. In terms of processing, phosphorylation at Ser-222 by AMPK inactivates the enzyme. Required for the maintenance of skeletal muscle lipid and glucose homeostasis. In terms of tissue distribution, widely expressed with highest levels in heart, skeletal muscle, liver, adipose tissue, mammary gland, adrenal gland and colon. Isoform 3 is expressed in skeletal muscle, adipose tissue and liver (at protein level). Isoform 3 is detected at high levels in adipose tissue with lower levels in heart, liver, skeletal muscle and testis.

Its subcellular location is the mitochondrion. It carries out the reaction hydrogencarbonate + acetyl-CoA + ATP = malonyl-CoA + ADP + phosphate + H(+). Its pathway is lipid metabolism; malonyl-CoA biosynthesis; malonyl-CoA from acetyl-CoA: step 1/1. Activity is increased by oligomerization of the protein into filaments. The oligomerization and the activity of the enzyme are inhibited by phosphorylation at Ser-222. Inhibited by its product, malonyl-CoA. Activated by citrate. Activation by MID1IP1 is citrate-dependent. Soraphen A, inhibits the enzyme by preventing the formation of active filamentous oligomers. Functionally, mitochondrial enzyme that catalyzes the carboxylation of acetyl-CoA to malonyl-CoA and plays a central role in fatty acid metabolism. Catalyzes a 2 steps reaction starting with the ATP-dependent carboxylation of the biotin carried by the biotin carboxyl carrier (BCC) domain followed by the transfer of the carboxyl group from carboxylated biotin to acetyl-CoA. Through the production of malonyl-CoA that allosterically inhibits carnitine palmitoyltransferase 1 at the mitochondria, negatively regulates fatty acid oxidation. Together with its cytosolic isozyme ACACA, which is involved in de novo fatty acid biosynthesis, promotes lipid storage. The polypeptide is Acetyl-CoA carboxylase 2 (Homo sapiens (Human)).